Consider the following 289-residue polypeptide: Ribosomal protein L11 methyltransferase (289 aa).

S-adenosyl-L-methionine-binding residues include T142, G163, D185, and N226.

This sequence belongs to the methyltransferase superfamily. PrmA family.

It is found in the cytoplasm. The enzyme catalyses L-lysyl-[protein] + 3 S-adenosyl-L-methionine = N(6),N(6),N(6)-trimethyl-L-lysyl-[protein] + 3 S-adenosyl-L-homocysteine + 3 H(+). Methylates ribosomal protein L11. This chain is Ribosomal protein L11 methyltransferase, found in Legionella pneumophila subsp. pneumophila (strain Philadelphia 1 / ATCC 33152 / DSM 7513).